Reading from the N-terminus, the 738-residue chain is Leucine-rich repeat flightless-interacting protein 1 (738 aa).

Thr2 bears the N-acetylthreonine mark. Ser16 carries the phosphoserine modification. Residues Ile40–Ser65 are compositionally biased toward basic and acidic residues. The disordered stretch occupies residues Ile40–Glu98. The segment covering Ser78 to Ser94 has biased composition (low complexity). Ser83, Ser84, Ser88, and Ser92 each carry phosphoserine. Residues Ser94–Lys194 are a coiled coil. Lys249 is covalently cross-linked (Glycyl lysine isopeptide (Lys-Gly) (interchain with G-Cter in SUMO1)). Composition is skewed to basic and acidic residues over residues Val253–Leu262 and Asp277–Glu297. Residues Val253 to Ser738 form a disordered region. Phosphoserine is present on Ser302. The span at Glu314–Leu326 shows a compositional bias: polar residues. The segment covering Glu330–Asn347 has biased composition (basic and acidic residues). Phosphoserine is present on residues Ser346 and Ser348. Polar residues predominate over residues Lys371–Ser380. Composition is skewed to basic and acidic residues over residues Gln381–His400 and Ser467–Ala476. The interval Glu479 to Pro580 is DNA-binding. Polar residues-rich tracts occupy residues Thr483–Thr495 and Thr520–Thr534. A compositionally biased stretch (basic and acidic residues) spans Asp535–Gln553. Phosphoserine occurs at positions 551 and 560. A compositionally biased stretch (basic residues) spans Lys563–Ala577. Basic and acidic residues predominate over residues Arg606–Gln626. Phosphoserine is present on residues Ser675 and Ser701. Basic and acidic residues-rich tracts occupy residues Gln691–Asp703 and Glu720–Ser738.

It belongs to the LRRFIP family. In terms of assembly, homodimer. May also form higher oligomers. Interacts with FLII. Interacts with MYD88. Competes with FLII for MyD88-binding, even in the absence of LPS.

Its subcellular location is the nucleus. It is found in the cytoplasm. In terms of biological role, transcriptional repressor which preferentially binds to the GC-rich consensus sequence (5'-AGCCCCCGGCG-3') and may regulate expression of TNF, EGFR and PDGFA. May control smooth muscle cells proliferation following artery injury through PDGFA repression. May also bind double-stranded RNA. Positively regulates Toll-like receptor (TLR) signaling in response to agonist probably by competing with the negative FLII regulator for MYD88-binding. The protein is Leucine-rich repeat flightless-interacting protein 1 (Lrrfip1) of Rattus norvegicus (Rat).